Reading from the N-terminus, the 488-residue chain is Alpha,alpha-trehalose-phosphate synthase [UDP-forming] 56 kDa subunit (488 aa).

Residues Tyr-102 and Asp-156 each coordinate D-glucose 6-phosphate. UDP-binding residues include Arg-293 and Lys-298. Residues Arg-293 and Lys-298 each coordinate UDP-alpha-D-glucose. Arg-331 lines the D-glucose 6-phosphate pocket. UDP is bound by residues Ile-370 and 396-400 (LVSYE). Residues Ile-370 and 392–400 (DGMNLVSYE) each bind UDP-alpha-D-glucose.

Belongs to the glycosyltransferase 20 family. In terms of assembly, trehalose synthase/phosphatase complex contains three or four polypeptides of 56 kDa (TPS1), 102 kDa (TPS2), 115 kDa (TPS3) and 123 kDa (TSL1).

It carries out the reaction D-glucose 6-phosphate + UDP-alpha-D-glucose = alpha,alpha-trehalose 6-phosphate + UDP + H(+). It functions in the pathway carbohydrate biosynthesis. Synthase catalytic subunit of the trehalose synthase complex that catalyzes the production of trehalose from glucose-6-phosphate and UDP-alpha-D-glucose in a two step process. Can function independently of the complex. This Kluyveromyces lactis (strain ATCC 8585 / CBS 2359 / DSM 70799 / NBRC 1267 / NRRL Y-1140 / WM37) (Yeast) protein is Alpha,alpha-trehalose-phosphate synthase [UDP-forming] 56 kDa subunit.